The primary structure comprises 487 residues: Inosine-5'-monophosphate dehydrogenase (487 aa).

2 consecutive CBS domains span residues 93 to 149 (IVSD…NKTV) and 153 to 214 (MTPK…CKDE). Residues Asp-248, 248–250 (DSS), and 298–300 (GIG) each bind NAD(+). K(+) is bound by residues Gly-300 and Gly-302. Ser-303 is an IMP binding site. Cys-305 serves as a coordination point for K(+). Cys-305 functions as the Thioimidate intermediate in the catalytic mechanism. IMP is bound by residues 338–340 (DGG), 361–362 (GS), and 385–389 (YRGMG). Arg-401 functions as the Proton acceptor in the catalytic mechanism. IMP is bound at residue Glu-415. Positions 469, 470, and 471 each coordinate K(+).

The protein belongs to the IMPDH/GMPR family. As to quaternary structure, homotetramer. Requires K(+) as cofactor.

It carries out the reaction IMP + NAD(+) + H2O = XMP + NADH + H(+). Its pathway is purine metabolism; XMP biosynthesis via de novo pathway; XMP from IMP: step 1/1. Its activity is regulated as follows. Mycophenolic acid (MPA) is a non-competitive inhibitor that prevents formation of the closed enzyme conformation by binding to the same site as the amobile flap. In contrast, mizoribine monophosphate (MZP) is a competitive inhibitor that induces the closed conformation. MPA is a potent inhibitor of mammalian IMPDHs but a poor inhibitor of the bacterial enzymes. MZP is a more potent inhibitor of bacterial IMPDH. Its function is as follows. Catalyzes the conversion of inosine 5'-phosphate (IMP) to xanthosine 5'-phosphate (XMP), the first committed and rate-limiting step in the de novo synthesis of guanine nucleotides, and therefore plays an important role in the regulation of cell growth. This chain is Inosine-5'-monophosphate dehydrogenase, found in Pasteurella multocida (strain Pm70).